We begin with the raw amino-acid sequence, 239 residues long: Small ribosomal subunit protein uS2 (239 aa).

It belongs to the universal ribosomal protein uS2 family.

This is Small ribosomal subunit protein uS2 from Prochlorococcus marinus (strain MIT 9303).